The sequence spans 322 residues: MIFSTLEHILTHISFSVVSIVITIHLITLLVDEIVGLSDSSEKGMIATFFCITGLLVTRWIYLGHFPLSDLYESLIFLSWSFSIIHIVPYFKKHKNHLSALTAPSAIFTQGFATSGLLTEMHQSEILVPALQSQWLMMHVSMMVLGYAALLCGSLLSVALLVITFRQDIRILCKNNHFLNKSFSFDEIQYMNKGNNVLQNTSFLSVRNYYRAQFIQQLDHWSYRVISLGFLFLTIGILSGAVWANEAWGSYWNWDPKETWAFITWTIFAIYLHTRTNKNLQVANSAIVASMGFLIIWICYFGVNLLGIGLHSYGSFTFSSNL.

A run of 8 helical transmembrane segments spans residues 17 to 37 (VVSI…IVGL), 44 to 64 (GMIA…IYLG), 71 to 91 (LYES…VPYF), 98 to 118 (LSAL…SGLL), 143 to 163 (MVLG…LLVI), 225 to 245 (VISL…VWAN), 258 to 273 (ETWA…IYLH), and 286 to 306 (AIVA…VNLL).

The protein belongs to the CcmF/CycK/Ccl1/NrfE/CcsA family. As to quaternary structure, may interact with Ccs1.

Its subcellular location is the plastid. It localises to the chloroplast thylakoid membrane. Required during biogenesis of c-type cytochromes (cytochrome c6 and cytochrome f) at the step of heme attachment. The polypeptide is Cytochrome c biogenesis protein CcsA (Vitis vinifera (Grape)).